The chain runs to 179 residues: Adaptation to cold protein A (179 aa).

A disordered region spans residues 133–179 (KATPAPKRSADDDFEDEDSDYADYSDDDDDEGEEEDGYYDHYDDEDR). The segment covering 144–179 (DDFEDEDSDYADYSDDDDDEGEEEDGYYDHYDDEDR) has biased composition (acidic residues).

Functionally, part of an operon involved in cold adaptation. In Shewanella oneidensis (strain ATCC 700550 / JCM 31522 / CIP 106686 / LMG 19005 / NCIMB 14063 / MR-1), this protein is Adaptation to cold protein A.